The primary structure comprises 278 residues: TIMELESS-interacting protein (278 aa).

Residues 1-59 form a disordered region; it reads MLEQEENGLFEIPDYEHVEDETFPPFPPPASPERDPADAEPEEGSGSGVPVPPKRTVKR. Positions 64 to 140 are interaction with TIMELESS; that stretch reads LDATRLTSER…KEVQTCLKRI (77 aa). Disordered stretches follow at residues 155 to 197 and 216 to 278; these read NDEV…EEQQ and LSNS…TNLD. A phosphoserine mark is found at S191 and S219. The segment covering 226 to 239 has biased composition (acidic residues); that stretch reads VTVEENSTGEDQEE. T233 carries the phosphothreonine modification. Basic and acidic residues predominate over residues 259–278; it reads THEEEQCKAEETQLDHTNLD.

This sequence belongs to the CSM3 family. Interacts with MCM6 and MCM7. Interacts with TIMELESS (via N-terminus), which impairs TIMELESS self-association. Interacts with RPA2 and PRDX2. As to expression, expressed in brain.

It is found in the cytoplasm. Its subcellular location is the nucleus. Its function is as follows. Plays an important role in the control of DNA replication and the maintenance of replication fork stability. Important for cell survival after DNA damage or replication stress. May be specifically required for the ATR-CHEK1 pathway in the replication checkpoint induced by hydroxyurea or ultraviolet light. Forms a complex with TIMELESS and this complex regulates DNA replication processes under both normal and stress conditions, stabilizes replication forks and influences both CHEK1 phosphorylation and the intra-S phase checkpoint in response to genotoxic stress. The sequence is that of TIMELESS-interacting protein (Tipin) from Mus musculus (Mouse).